A 124-amino-acid polypeptide reads, in one-letter code: Large ribosomal subunit protein uL14 (124 aa).

The protein belongs to the universal ribosomal protein uL14 family. In terms of assembly, part of the 50S ribosomal subunit. Forms a cluster with proteins L3 and L19. In the 70S ribosome, L14 and L19 interact and together make contacts with the 16S rRNA in bridges B5 and B8.

Its function is as follows. Binds to 23S rRNA. Forms part of two intersubunit bridges in the 70S ribosome. This chain is Large ribosomal subunit protein uL14, found in Clostridium novyi (strain NT).